Reading from the N-terminus, the 349-residue chain is Paired box protein Pax-4 (349 aa).

A DNA-binding region (paired) is located at residues glycine 5–leucine 131. A PAI subdomain region spans residues serine 8–threonine 64. The interval alanine 83–leucine 131 is RED subdomain. Residues serine 170–glutamate 229 constitute a DNA-binding region (homeobox). The transcription repression stretch occupies residues phenylalanine 278–proline 349.

The protein belongs to the paired homeobox family. Specifically expressed in pancreatic islets.

The protein localises to the nucleus. Plays an important role in the differentiation and development of pancreatic islet beta cells. Transcriptional repressor that competes with PAX6 in binding to a common element in the glucagon, insulin and somatostatin promoters. The chain is Paired box protein Pax-4 (Pax4) from Rattus norvegicus (Rat).